The following is a 210-amino-acid chain: Urease accessory protein UreF (210 aa).

Belongs to the UreF family. UreD, UreF and UreG form a complex that acts as a GTP-hydrolysis-dependent molecular chaperone, activating the urease apoprotein by helping to assemble the nickel containing metallocenter of UreC. The UreE protein probably delivers the nickel.

It is found in the cytoplasm. Its function is as follows. Required for maturation of urease via the functional incorporation of the urease nickel metallocenter. This chain is Urease accessory protein UreF, found in Dinoroseobacter shibae (strain DSM 16493 / NCIMB 14021 / DFL 12).